We begin with the raw amino-acid sequence, 129 residues long: Thyroid hormone receptor alpha (129 aa).

The NR LBD domain occupies 26-129 (AEWELIRMVT…EIMSLRAAVR (104 aa)). Residue arginine 91 coordinates 3,3',5-triiodo-L-thyronine.

It belongs to the nuclear hormone receptor family. NR1 subfamily.

The protein localises to the nucleus. In terms of biological role, nuclear hormone receptor that can act as a repressor or activator of transcription. High affinity receptor for thyroid hormones, including triiodothyronine and thyroxine. This is Thyroid hormone receptor alpha (thra1) from Sparus aurata (Gilthead sea bream).